The sequence spans 484 residues: Glutamyl-tRNA(Gln) amidotransferase subunit A (484 aa).

Active-site charge relay system residues include K76 and S151. The active-site Acyl-ester intermediate is S175.

This sequence belongs to the amidase family. GatA subfamily. Heterotrimer of A, B and C subunits.

The catalysed reaction is L-glutamyl-tRNA(Gln) + L-glutamine + ATP + H2O = L-glutaminyl-tRNA(Gln) + L-glutamate + ADP + phosphate + H(+). In terms of biological role, allows the formation of correctly charged Gln-tRNA(Gln) through the transamidation of misacylated Glu-tRNA(Gln) in organisms which lack glutaminyl-tRNA synthetase. The reaction takes place in the presence of glutamine and ATP through an activated gamma-phospho-Glu-tRNA(Gln). The polypeptide is Glutamyl-tRNA(Gln) amidotransferase subunit A (Thioalkalivibrio sulfidiphilus (strain HL-EbGR7)).